The sequence spans 1799 residues: Putative neural-cadherin 2 (1799 aa).

9 N-linked (GlcNAc...) asparagine glycosylation sites follow: asparagine 13, asparagine 64, asparagine 86, asparagine 118, asparagine 195, asparagine 260, asparagine 264, asparagine 283, and asparagine 377. 7 consecutive Cadherin domains span residues 37–136, 137–252, 253–364, 368–485, 486–590, 590–709, and 708–812; these read DRFL…PPVF, DRQT…APQF, PQGI…PPQF, EWVT…VPKF, DREH…APTF, FAQD…QPGS, and GSKS…AGSM. N-linked (GlcNAc...) asparagine glycosylation is found at asparagine 601, asparagine 793, asparagine 910, asparagine 948, and asparagine 969. In terms of domain architecture, EGF-like 1 spans 973-1010; sequence QDHNCRTHLCYNGGRCVETRNGPKCVACPVGYNGPRCQ. Cystine bridges form between cysteine 977/cysteine 988, cysteine 982/cysteine 997, cysteine 1000/cysteine 1009, cysteine 1191/cysteine 1217, cysteine 1224/cysteine 1239, cysteine 1233/cysteine 1248, and cysteine 1250/cysteine 1259. One can recognise a Laminin G-like 1 domain in the interval 1011–1217; the sequence is QSTRSFRGNG…ALARNSFPAC (207 aa). The EGF-like 2 domain maps to 1220-1260; that stretch reads TDEVCLKTEHTARCWEHGNCVASLVQAKCHCQPGWMGPGCN. The Laminin G-like 2 domain occupies 1263-1454; it reads TIPTTFKAQS…TMARNLERNC (192 aa). N-linked (GlcNAc...) asparagine glycosylation is found at asparagine 1376 and asparagine 1437. 4 disulfide bridges follow: cysteine 1419–cysteine 1454, cysteine 1501–cysteine 1512, cysteine 1506–cysteine 1523, and cysteine 1525–cysteine 1534. The EGF-like 3; calcium-binding domain occupies 1497–1535; the sequence is DRNECLDLPCLNGATCINLEPRLRYRCICPEGYWGENCE. The helical transmembrane segment at 1549-1569 threads the bilayer; the sequence is ALGAIFVCLIIILILALIFVL. Positions 1726 to 1799 are disordered; it reads ASSQLPSDGG…PLPEVDKVVL (74 aa). 3 stretches are compositionally biased toward gly residues: residues 1733 to 1744, 1752 to 1763, and 1775 to 1786; these read DGGGGSGDGPGP, LGGGGTGGGSGI, and SGAGPGGGGGSS.

It localises to the cell membrane. Functionally, cadherins are calcium-dependent cell adhesion proteins. They preferentially interact with themselves in a homophilic manner in connecting cells. The polypeptide is Putative neural-cadherin 2 (CadN2) (Drosophila melanogaster (Fruit fly)).